Here is a 2116-residue protein sequence, read N- to C-terminus: Unconventional myosin-VIIb (2116 aa).

A Myosin motor domain is found at 65 to 760 (QGVDDMIRLG…QDTLLEVQRS (696 aa)). 158-165 (GESGAGKT) serves as a coordination point for ATP. An actin-binding region spans residues 637–659 (LDQLMKILTNCQPYFIRCIKPNE). 6 consecutive IQ domains span residues 745 to 765 (IFLR…VLDR), 763 to 792 (LDRA…AAVT), 786 to 815 (QRRA…GFER), 814 to 834 (ERLQ…AMRQ), 832 to 861 (MRQR…AVVV), and 855 to 884 (KRRA…NAPL). Ser-904 is modified (phosphoserine). Positions 916-1542 (EKVFGFLPAM…KKQGLLASEN (627 aa)) are mediates interaction with ANKS4B. Positions 989–1192 (HIRRPLRYPL…PTWLELQAVK (204 aa)) constitute a MyTH4 1 domain. In terms of domain architecture, FERM 1 spans 1197–1506 (IPIQVILATG…EGLKERSIFA (310 aa)). A Phosphoserine modification is found at Ser-1371. Residues 1501-1567 (ERSIFAMALQ…PMACLYTIPT (67 aa)) enclose the SH3 domain. Residues 1501–2116 (ERSIFAMALQ…GSKAPALAST (616 aa)) are mediates interaction with CDHR2, CDHR5 and USH1C. MyTH4 domains lie at 1644-1793 (YSCE…EAAE) and 1790-1896 (EAAE…KLWL). The residue at position 1645 (Ser-1645) is a Phosphoserine. Residues 1799-2102 (ICHKIYFPND…SYVQQLLSAM (304 aa)) form the FERM 2 domain.

Belongs to the TRAFAC class myosin-kinesin ATPase superfamily. Myosin family. In terms of assembly, part of the IMAC/intermicrovillar adhesion complex/intermicrovillar tip-link complex composed of ANKS4B, MYO7B, USH1C, CDHR2 and CDHR5. Interacts with CDHR2. Interacts with CDHR5. Interacts with USH1C. Interacts with ANKS4B; requires initial interaction with USH1C. Interacts with CALML4; the interaction mediates the association of CALML4 with the IMAC/intermicrovillar adhesion complex.

It is found in the cytoplasm. The protein localises to the cytoskeleton. The protein resides in the cell projection. It localises to the microvillus. Functionally, myosins are actin-based motor molecules with ATPase activity. Their highly divergent tails are presumed to bind to membranous compartments, which would be moved relative to actin filaments. As part of the intermicrovillar adhesion complex/IMAC plays a role in epithelial brush border differentiation, controlling microvilli organization and length. May link the complex to the actin core bundle of microvilli. The chain is Unconventional myosin-VIIb from Homo sapiens (Human).